The chain runs to 286 residues: Acetyl-coenzyme A carboxylase carboxyl transferase subunit beta (286 aa).

The region spanning 26–286 (LWEKCVKCDA…LAKFTRRAAV (261 aa)) is the CoA carboxyltransferase N-terminal domain. Positions 30, 33, 49, and 52 each coordinate Zn(2+). The C4-type zinc-finger motif lies at 30 to 52 (CVKCDAVLYKPELEKNLDVCPKC).

Belongs to the AccD/PCCB family. Acetyl-CoA carboxylase is a heterohexamer composed of biotin carboxyl carrier protein (AccB), biotin carboxylase (AccC) and two subunits each of ACCase subunit alpha (AccA) and ACCase subunit beta (AccD). Zn(2+) is required as a cofactor.

It localises to the cytoplasm. The enzyme catalyses N(6)-carboxybiotinyl-L-lysyl-[protein] + acetyl-CoA = N(6)-biotinyl-L-lysyl-[protein] + malonyl-CoA. Its pathway is lipid metabolism; malonyl-CoA biosynthesis; malonyl-CoA from acetyl-CoA: step 1/1. In terms of biological role, component of the acetyl coenzyme A carboxylase (ACC) complex. Biotin carboxylase (BC) catalyzes the carboxylation of biotin on its carrier protein (BCCP) and then the CO(2) group is transferred by the transcarboxylase to acetyl-CoA to form malonyl-CoA. The chain is Acetyl-coenzyme A carboxylase carboxyl transferase subunit beta from Cellvibrio japonicus (strain Ueda107) (Pseudomonas fluorescens subsp. cellulosa).